Here is a 131-residue protein sequence, read N- to C-terminus: Superoxide dismutase [Ni] (131 aa).

Residues 1–14 constitute a propeptide that is removed on maturation; that stretch reads MLSRLFAPKVKVSA. 3 residues coordinate Ni(2+): histidine 15, cysteine 16, and cysteine 20.

The protein belongs to the nickel superoxide dismutase family. In terms of assembly, homohexamer. The hexameric protein has roughly the shape of a hollow sphere with an outer diameter of 72 Angstroms and a large inner cavity. Ni(2+) serves as cofactor.

It is found in the cytoplasm. It catalyses the reaction 2 superoxide + 2 H(+) = H2O2 + O2. This Streptomyces seoulensis protein is Superoxide dismutase [Ni] (sodN).